Here is a 282-residue protein sequence, read N- to C-terminus: Acetyl-coenzyme A carboxylase carboxyl transferase subunit beta (282 aa).

A CoA carboxyltransferase N-terminal domain is found at 26–282 (QWVKCPETGE…IIRLLNLLME (257 aa)).

Belongs to the AccD/PCCB family. As to quaternary structure, acetyl-CoA carboxylase is a heterohexamer composed of biotin carboxyl carrier protein (AccB), biotin carboxylase (AccC) and two subunits each of ACCase subunit alpha (AccA) and ACCase subunit beta (AccD).

It localises to the cytoplasm. It catalyses the reaction N(6)-carboxybiotinyl-L-lysyl-[protein] + acetyl-CoA = N(6)-biotinyl-L-lysyl-[protein] + malonyl-CoA. Its pathway is lipid metabolism; malonyl-CoA biosynthesis; malonyl-CoA from acetyl-CoA: step 1/1. Functionally, component of the acetyl coenzyme A carboxylase (ACC) complex. Biotin carboxylase (BC) catalyzes the carboxylation of biotin on its carrier protein (BCCP) and then the CO(2) group is transferred by the transcarboxylase to acetyl-CoA to form malonyl-CoA. In Salinibacter ruber (strain DSM 13855 / M31), this protein is Acetyl-coenzyme A carboxylase carboxyl transferase subunit beta.